Reading from the N-terminus, the 299-residue chain is Recombination-associated protein RdgC (299 aa).

The protein belongs to the RdgC family.

It is found in the cytoplasm. The protein localises to the nucleoid. In terms of biological role, may be involved in recombination. This Cupriavidus necator (strain ATCC 17699 / DSM 428 / KCTC 22496 / NCIMB 10442 / H16 / Stanier 337) (Ralstonia eutropha) protein is Recombination-associated protein RdgC.